A 677-amino-acid polypeptide reads, in one-letter code: UPF0652 protein (677 aa).

The segment at 38-84 adopts a B box-type; atypical zinc-finger fold; sequence ETPGMCCECTDQPAEVVCLQCQDELCTVCSTSLHRRGSRRSHIFKNK. Residues cysteine 43, cysteine 46, cysteine 66, and histidine 71 each coordinate Zn(2+). Residues 91–111 show a composition bias toward basic and acidic residues; it reads YDELNKRDRQPPLHGKEDEKV. Disordered stretches follow at residues 91-142 and 156-192; these read YDEL…NNNI and LNPLPFHHTNQQRNGGGSNNHQINNHHKDEDEEIDED. Residues 113–126 show a composition bias toward low complexity; that stretch reads NNNNNNNNTNNTNN. Over residues 163–178 the composition is skewed to polar residues; it reads HTNQQRNGGGSNNHQI.

It belongs to the UPF0652 family.

This Dictyostelium discoideum (Social amoeba) protein is UPF0652 protein.